Reading from the N-terminus, the 73-residue chain is Sec-independent protein translocase protein TatA (73 aa).

The helical transmembrane segment at methionine 1 to glycine 21 threads the bilayer. Positions methionine 43–lysine 73 are disordered. Residues glutamate 60–lysine 73 are compositionally biased toward basic and acidic residues.

This sequence belongs to the TatA/E family. The Tat system comprises two distinct complexes: a TatABC complex, containing multiple copies of TatA, TatB and TatC subunits, and a separate TatA complex, containing only TatA subunits. Substrates initially bind to the TatABC complex, which probably triggers association of the separate TatA complex to form the active translocon.

It is found in the cell inner membrane. Part of the twin-arginine translocation (Tat) system that transports large folded proteins containing a characteristic twin-arginine motif in their signal peptide across membranes. TatA could form the protein-conducting channel of the Tat system. In Laribacter hongkongensis (strain HLHK9), this protein is Sec-independent protein translocase protein TatA.